Consider the following 61-residue polypeptide: SPbeta prophage-derived uncharacterized protein YotK (61 aa).

Residues 7 to 57 adopt a coiled-coil conformation; that stretch reads SIQTLLNKMDRQMKTVKEAIEEKDLQRAHRNLINLADNNEELMQEIRWVKK.

The polypeptide is SPbeta prophage-derived uncharacterized protein YotK (yotK) (Bacillus subtilis (strain 168)).